The primary structure comprises 359 residues: Ribosomal RNA large subunit methyltransferase M (359 aa).

S-adenosyl-L-methionine-binding positions include Ser186, 219–222 (CPGG), Asp238, Asp258, and Asp275. Catalysis depends on Lys304, which acts as the Proton acceptor.

The protein belongs to the class I-like SAM-binding methyltransferase superfamily. RNA methyltransferase RlmE family. RlmM subfamily. In terms of assembly, monomer.

Its subcellular location is the cytoplasm. The enzyme catalyses cytidine(2498) in 23S rRNA + S-adenosyl-L-methionine = 2'-O-methylcytidine(2498) in 23S rRNA + S-adenosyl-L-homocysteine + H(+). Its function is as follows. Catalyzes the 2'-O-methylation at nucleotide C2498 in 23S rRNA. The protein is Ribosomal RNA large subunit methyltransferase M of Aliivibrio fischeri (strain MJ11) (Vibrio fischeri).